The primary structure comprises 531 residues: Transmembrane protein 266 (531 aa).

Topologically, residues 1 to 102 are cytoplasmic; that stretch reads MALAASFNMT…VFLLSASLNS (102 aa). A helical membrane pass occupies residues 103–123; sequence FLVACVILVVILLTLELLIDI. Residues 124–129 lie on the Extracellular side of the membrane; the sequence is KLLQFS. Residues 130–150 form a helical membrane-spanning segment; the sequence is SAFQFAGVIHWISLVILSVFF. Residues 151 to 169 are Cytoplasmic-facing; sequence SETVLRIVVLGIWDYIENK. A helical membrane pass occupies residues 170 to 190; it reads IEVFDGAVIILSLAPMVASTV. Topologically, residues 191 to 199 are extracellular; sequence ANGPRSPWD. The helical transmembrane segment at 200–220 threads the bilayer; it reads AISLIIMLRIWRVKRVIDAYV. The Cytoplasmic segment spans residues 221 to 531; sequence LPVKLEMEMV…EQKLHRVPEA (311 aa). A coiled-coil region spans residues 231-251; the sequence is IQQYEKAKVIQDEQLERLTQI. Positions 380-477 are disordered; the sequence is NGTGATSESA…PAGSAQTSPE (98 aa). A compositionally biased stretch (polar residues) spans 383–412; sequence GATSESASRSSVTRAQSDSSQTLGSSTDCS. Residues 421–431 show a composition bias toward pro residues; that stretch reads EPGPSPLPLPP.

In terms of assembly, homodimer; disulfide-linked.

The protein localises to the cell membrane. It is found in the cell projection. It localises to the dendrite. The protein resides in the perikaryon. Functionally, voltage-sensor protein present on the post-synaptic side of glutamatergic mossy fibers and granule cells in the cerebellum. Despite the presence of a voltage-sensor segment, does not form a functional ion channel and its precise role remains unclear. Undergoes both rapid and slow structural rearrangements in response to changes in voltage. Contains a zinc-binding site that can regulate the slow conformational transition. This chain is Transmembrane protein 266, found in Macaca fascicularis (Crab-eating macaque).